The chain runs to 283 residues: Pantothenate synthetase (283 aa).

26-33 (MGNLHEGH) lines the ATP pocket. The active-site Proton donor is the histidine 33. A (R)-pantoate-binding site is contributed by glutamine 57. Glutamine 57 is a beta-alanine binding site. 144 to 147 (GKKD) serves as a coordination point for ATP. Glutamine 150 contacts (R)-pantoate. ATP is bound by residues valine 173 and 181–184 (LSSR).

Belongs to the pantothenate synthetase family. As to quaternary structure, homodimer.

It is found in the cytoplasm. The catalysed reaction is (R)-pantoate + beta-alanine + ATP = (R)-pantothenate + AMP + diphosphate + H(+). It participates in cofactor biosynthesis; (R)-pantothenate biosynthesis; (R)-pantothenate from (R)-pantoate and beta-alanine: step 1/1. Its function is as follows. Catalyzes the condensation of pantoate with beta-alanine in an ATP-dependent reaction via a pantoyl-adenylate intermediate. This Ralstonia nicotianae (strain ATCC BAA-1114 / GMI1000) (Ralstonia solanacearum) protein is Pantothenate synthetase.